We begin with the raw amino-acid sequence, 351 residues long: Small ribosomal subunit biogenesis GTPase RsgA 1 (351 aa).

The CP-type G domain maps to 100-258 (LRTDAQIVAS…IIDTPGMREL (159 aa)). GTP contacts are provided by residues 148–151 (SKVD) and 200–208 (GSSGAGKST). Positions 282, 287, 289, and 295 each coordinate Zn(2+).

The protein belongs to the TRAFAC class YlqF/YawG GTPase family. RsgA subfamily. In terms of assembly, monomer. Associates with 30S ribosomal subunit, binds 16S rRNA. It depends on Zn(2+) as a cofactor.

It is found in the cytoplasm. Functionally, one of several proteins that assist in the late maturation steps of the functional core of the 30S ribosomal subunit. Helps release RbfA from mature subunits. May play a role in the assembly of ribosomal proteins into the subunit. Circularly permuted GTPase that catalyzes slow GTP hydrolysis, GTPase activity is stimulated by the 30S ribosomal subunit. This Oceanobacillus iheyensis (strain DSM 14371 / CIP 107618 / JCM 11309 / KCTC 3954 / HTE831) protein is Small ribosomal subunit biogenesis GTPase RsgA 1.